The sequence spans 645 residues: 1-deoxy-D-xylulose-5-phosphate synthase (645 aa).

Thiamine diphosphate-binding positions include His83 and 124–126 (GHS). Asp155 lines the Mg(2+) pocket. Residues 156-157 (GS), Asn184, Tyr295, and Glu376 contribute to the thiamine diphosphate site. Asn184 is a Mg(2+) binding site.

This sequence belongs to the transketolase family. DXPS subfamily. In terms of assembly, homodimer. The cofactor is Mg(2+). It depends on thiamine diphosphate as a cofactor.

The catalysed reaction is D-glyceraldehyde 3-phosphate + pyruvate + H(+) = 1-deoxy-D-xylulose 5-phosphate + CO2. Its pathway is metabolic intermediate biosynthesis; 1-deoxy-D-xylulose 5-phosphate biosynthesis; 1-deoxy-D-xylulose 5-phosphate from D-glyceraldehyde 3-phosphate and pyruvate: step 1/1. Its function is as follows. Catalyzes the acyloin condensation reaction between C atoms 2 and 3 of pyruvate and glyceraldehyde 3-phosphate to yield 1-deoxy-D-xylulose-5-phosphate (DXP). The protein is 1-deoxy-D-xylulose-5-phosphate synthase of Desulfotalea psychrophila (strain LSv54 / DSM 12343).